Here is a 442-residue protein sequence, read N- to C-terminus: Inner membrane protein PPF-1, chloroplastic (442 aa).

At 1 to 108 the chain is on the lumenal side; it reads MAKTLISSPS…EFVLKVLKDG (108 aa). The helical transmembrane segment at 109 to 129 threads the bilayer; sequence LSSVHVPYSYGFAIILLTVIV. Topologically, residues 130-183 are stromal; it reads KAATLPLTKQQVESTLAMQNLQPKIKAIQERYAGNQERIQLETSRLYTQAGVNP. A helical membrane pass occupies residues 184–204; it reads LAGCLPTLATIPVWIGLYQAL. The Lumenal portion of the chain corresponds to 205–296; that stretch reads SNVANEGLLT…QKNTLLIFKF (92 aa). The chain crosses the membrane as a helical span at residues 297–317; sequence LPLMIGYFSLSVPSGLTIYWF. Over 318–442 the chain is Stromal; it reads TNNVLSTAQQ…SKRSKRKPVA (125 aa). 2 disordered regions span residues 350-371 and 390-442; these read AGQAKRSASKPEKGGERFRQLK and PLAS…KPVA. A compositionally biased stretch (basic and acidic residues) spans 358-371; it reads SKPEKGGERFRQLK. Over residues 414–427 the composition is skewed to polar residues; it reads ESNTSKVSQEVQSF. Residues 431 to 442 show a composition bias toward basic residues; the sequence is RRSKRSKRKPVA.

This sequence belongs to the OXA1/ALB3/YidC (TC 2.A.9.2) family. As to expression, highly expressed in apical buds. Low levels of expression in leaves. Not expressed in roots, and stems.

The protein resides in the plastid. Its subcellular location is the chloroplast thylakoid membrane. May be required for the insertion of some integral membrane proteins into the chloroplast thylakoid membrane. May play a role in inhibiting senescence. This chain is Inner membrane protein PPF-1, chloroplastic (PPF-1), found in Pisum sativum (Garden pea).